Consider the following 394-residue polypeptide: Cell adhesion molecule 3 (394 aa).

The signal sequence occupies residues 1-17 (MHHPVILLLCLSSLAGA). Over 18–326 (ANLPPEDLSQ…PIPSTSSIDH (309 aa)) the chain is Extracellular. Positions 22-120 (PEDLSQPVTA…PVRTAKAVVT (99 aa)) constitute an Ig-like V-type domain. 2 disulfides stabilise this stretch: Cys-45–Cys-105 and Cys-147–Cys-204. 2 Ig-like C2-type domains span residues 128–223 (PQVS…HKIQ) and 228–306 (PTAK…TFIT). The segment at 217 to 240 (SSSHKIQVQYKPTAKIESRPSMPR) is disordered. Residues 230–240 (AKIESRPSMPR) are compositionally biased toward basic and acidic residues. An intrachain disulfide couples Cys-249 to Cys-295. Residues 327–347 (AVIGGVVAVIAFLLFCLLIVL) traverse the membrane as a helical segment. At 348-394 (GRYLIRHKGTYLTHEAKGSDDAPDADTAIINAEGGQGGSDDKKEYFI) the chain is on the cytoplasmic side. The disordered stretch occupies residues 363–394 (AKGSDDAPDADTAIINAEGGQGGSDDKKEYFI).

It belongs to the nectin family.

Its subcellular location is the cell membrane. It is found in the cell junction. May be involved in cell-cell adhesion. The sequence is that of Cell adhesion molecule 3 (cadm3) from Xenopus laevis (African clawed frog).